The primary structure comprises 368 residues: 3-dehydroquinate synthase (368 aa).

NAD(+) contacts are provided by residues 69–74, 103–107, 127–128, K140, and K149; these read DGEAYK, GVIGD, and TT. Positions 182, 245, and 262 each coordinate Zn(2+).

It belongs to the sugar phosphate cyclases superfamily. Dehydroquinate synthase family. It depends on NAD(+) as a cofactor. Requires Co(2+) as cofactor. Zn(2+) is required as a cofactor.

It localises to the cytoplasm. It carries out the reaction 7-phospho-2-dehydro-3-deoxy-D-arabino-heptonate = 3-dehydroquinate + phosphate. It participates in metabolic intermediate biosynthesis; chorismate biosynthesis; chorismate from D-erythrose 4-phosphate and phosphoenolpyruvate: step 2/7. In terms of biological role, catalyzes the conversion of 3-deoxy-D-arabino-heptulosonate 7-phosphate (DAHP) to dehydroquinate (DHQ). This chain is 3-dehydroquinate synthase, found in Pseudomonas aeruginosa (strain ATCC 15692 / DSM 22644 / CIP 104116 / JCM 14847 / LMG 12228 / 1C / PRS 101 / PAO1).